Reading from the N-terminus, the 164-residue chain is tRNA (cytidine(34)-2'-O)-methyltransferase (164 aa).

S-adenosyl-L-methionine-binding residues include Met80, Gly102, Val124, and Ser132.

Belongs to the class IV-like SAM-binding methyltransferase superfamily. RNA methyltransferase TrmH family. TrmL subfamily. As to quaternary structure, homodimer.

It localises to the cytoplasm. The enzyme catalyses cytidine(34) in tRNA + S-adenosyl-L-methionine = 2'-O-methylcytidine(34) in tRNA + S-adenosyl-L-homocysteine + H(+). It catalyses the reaction 5-carboxymethylaminomethyluridine(34) in tRNA(Leu) + S-adenosyl-L-methionine = 5-carboxymethylaminomethyl-2'-O-methyluridine(34) in tRNA(Leu) + S-adenosyl-L-homocysteine + H(+). Methylates the ribose at the nucleotide 34 wobble position in the two leucyl isoacceptors tRNA(Leu)(CmAA) and tRNA(Leu)(cmnm5UmAA). Catalyzes the methyl transfer from S-adenosyl-L-methionine to the 2'-OH of the wobble nucleotide. The sequence is that of tRNA (cytidine(34)-2'-O)-methyltransferase from Polaromonas sp. (strain JS666 / ATCC BAA-500).